The primary structure comprises 95 residues: UPF0213 protein YPA_2977 (95 aa).

The 76-residue stretch at 4–79 (SLWHLYLLRT…KQLSKQQKEK (76 aa)) folds into the GIY-YIG domain.

The protein belongs to the UPF0213 family.

The polypeptide is UPF0213 protein YPA_2977 (Yersinia pestis bv. Antiqua (strain Antiqua)).